The sequence spans 329 residues: L-lactate dehydrogenase (329 aa).

NAD(+) contacts are provided by residues Val18, Glu39, Lys46, Tyr71, and 85–86 (GA). Gln88 and Arg94 together coordinate substrate. NAD(+) contacts are provided by residues Ser107, 124–126 (AAN), and Ser149. 126 to 129 (NPVD) provides a ligand contact to substrate. 154-157 (DSAR) lines the substrate pocket. The beta-D-fructose 1,6-bisphosphate site is built by Arg159 and His174. His181 acts as the Proton acceptor in catalysis. Residue Tyr226 is modified to Phosphotyrosine. Thr235 serves as a coordination point for substrate.

This sequence belongs to the LDH/MDH superfamily. LDH family. As to quaternary structure, homotetramer.

It is found in the cytoplasm. The catalysed reaction is (S)-lactate + NAD(+) = pyruvate + NADH + H(+). The protein operates within fermentation; pyruvate fermentation to lactate; (S)-lactate from pyruvate: step 1/1. Its activity is regulated as follows. Allosterically activated by fructose 1,6-bisphosphate (FBP). Catalyzes the conversion of lactate to pyruvate. In Streptococcus equinus (Streptococcus bovis), this protein is L-lactate dehydrogenase.